The following is a 156-amino-acid chain: Small ribosomal subunit protein uS7 (156 aa).

It belongs to the universal ribosomal protein uS7 family. In terms of assembly, part of the 30S ribosomal subunit. Contacts proteins S9 and S11.

One of the primary rRNA binding proteins, it binds directly to 16S rRNA where it nucleates assembly of the head domain of the 30S subunit. Is located at the subunit interface close to the decoding center, probably blocks exit of the E-site tRNA. The polypeptide is Small ribosomal subunit protein uS7 (Desulfitobacterium hafniense (strain Y51)).